A 396-amino-acid polypeptide reads, in one-letter code: S-adenosylmethionine synthase (396 aa).

Histidine 16 provides a ligand contact to ATP. Aspartate 18 is a Mg(2+) binding site. Glutamate 44 is a binding site for K(+). Glutamate 57 and glutamine 100 together coordinate L-methionine. Residues 100–110 (QSVDINQGVDR) are flexible loop. ATP-binding positions include 165–167 (DAK), 231–232 (KF), aspartate 240, 246–247 (RK), alanine 263, and lysine 267. Aspartate 240 serves as a coordination point for L-methionine. Lysine 271 serves as a coordination point for L-methionine.

This sequence belongs to the AdoMet synthase family. Homotetramer; dimer of dimers. Mg(2+) serves as cofactor. It depends on K(+) as a cofactor.

It localises to the cytoplasm. It carries out the reaction L-methionine + ATP + H2O = S-adenosyl-L-methionine + phosphate + diphosphate. Its pathway is amino-acid biosynthesis; S-adenosyl-L-methionine biosynthesis; S-adenosyl-L-methionine from L-methionine: step 1/1. Catalyzes the formation of S-adenosylmethionine (AdoMet) from methionine and ATP. The overall synthetic reaction is composed of two sequential steps, AdoMet formation and the subsequent tripolyphosphate hydrolysis which occurs prior to release of AdoMet from the enzyme. The sequence is that of S-adenosylmethionine synthase from Azotobacter vinelandii (strain DJ / ATCC BAA-1303).